A 345-amino-acid polypeptide reads, in one-letter code: MYESANVSDDADRTAFRRAEKKYKLYYEQDSKFSRKKKLPKPIDLSELLDFNLISQNFNNDGVLPDGIRVSKVDSSPVFCIDNRPGFYFIPDALSLKEQCKWIKESLTSFPQPPNRTNHNAIYGPIDDLFDSAKENKVLVQDDLTNNKWKFYEEVDIEKATRSSCKSVSASVLLRKLRWSTLGLQFDWSKRNYDVSLPHNNIPDALCQLAKTHAAIAMPDGEEFRPEGAIVNYFGIGDTLGGHLDDMEADWSKPIVSMSLGCKAIFLLGGKSKDDPPHAMYLRSGDVVLMAGEARECFHGIPRIFTGEENADIGALESELSHESGHFFAEYIKTSRININIRQVF.

Substrate contacts are provided by residues Trp179 and 186–188 (FDW). Positions 225–345 (RPEGAIVNYF…RININIRQVF (121 aa)) constitute a Fe2OG dioxygenase domain. 232 to 234 (NYF) contacts 2-oxoglutarate. Residues His243, Asp245, and His299 each contribute to the Fe cation site. 336–342 (RININIR) contributes to the 2-oxoglutarate binding site.

This sequence belongs to the alkB family. The cofactor is Fe(2+). As to expression, mostly expressed in siliques, to a lower extent in roots, seedlings and rosette leaves, but barely in cauline leaves, stems and flowers.

It localises to the nucleus. Its subcellular location is the cytoplasm. It catalyses the reaction an N(6)-methyl-2'-deoxyadenosine in DNA + 2-oxoglutarate + O2 = a 2'-deoxyadenosine in DNA + formaldehyde + succinate + CO2. Dioxygenase that catalyzes DNA N(6)-methyladenine (6 mA) demethylation to modulate gene expression and regulate seed germination. The sequence is that of DNA N(6)-methyladenine demethylase ALKBH1A from Arabidopsis thaliana (Mouse-ear cress).